We begin with the raw amino-acid sequence, 365 residues long: Protein RecA (365 aa).

Residue 81-88 (GPESSGKT) participates in ATP binding.

The protein belongs to the RecA family.

It localises to the cytoplasm. Functionally, can catalyze the hydrolysis of ATP in the presence of single-stranded DNA, the ATP-dependent uptake of single-stranded DNA by duplex DNA, and the ATP-dependent hybridization of homologous single-stranded DNAs. It interacts with LexA causing its activation and leading to its autocatalytic cleavage. The polypeptide is Protein RecA (Borreliella burgdorferi (strain ATCC 35210 / DSM 4680 / CIP 102532 / B31) (Borrelia burgdorferi)).